A 294-amino-acid chain; its full sequence is NAD kinase (294 aa).

D74 acts as the Proton acceptor in catalysis. NAD(+) is bound by residues 74-75 (DG), 148-149 (ND), R159, R176, D178, 189-194 (TAYALS), and Q247.

Belongs to the NAD kinase family. Requires a divalent metal cation as cofactor.

The protein resides in the cytoplasm. It carries out the reaction NAD(+) + ATP = ADP + NADP(+) + H(+). Its function is as follows. Involved in the regulation of the intracellular balance of NAD and NADP, and is a key enzyme in the biosynthesis of NADP. Catalyzes specifically the phosphorylation on 2'-hydroxyl of the adenosine moiety of NAD to yield NADP. The protein is NAD kinase of Azoarcus sp. (strain BH72).